The primary structure comprises 376 residues: Alcohol dehydrogenase 1 (376 aa).

At Ser2 the chain carries N-acetylserine. Residues Cys47, His68, Cys98, Cys101, Cys104, Cys112, and Cys176 each coordinate Zn(2+). NAD(+) contacts are provided by residues 201–206 (GLGGVG), Asp225, Lys230, 294–296 (VGV), and Arg371.

The protein belongs to the zinc-containing alcohol dehydrogenase family. Class-I subfamily. In terms of assembly, homodimer. Zn(2+) serves as cofactor.

Its subcellular location is the cytoplasm. It catalyses the reaction a primary alcohol + NAD(+) = an aldehyde + NADH + H(+). The enzyme catalyses a secondary alcohol + NAD(+) = a ketone + NADH + H(+). The sequence is that of Alcohol dehydrogenase 1 (ADH1) from Gallus gallus (Chicken).